Consider the following 270-residue polypeptide: PspA protein (270 aa).

The tract at residues 238 to 270 is disordered; sequence MRGEALPAGGTTATPRPATETSGGAIAEQPYGQ. Positions 240–258 are enriched in low complexity; that stretch reads GEALPAGGTTATPRPATET.

Belongs to the PspA/Vipp/IM30 family.

It localises to the cytoplasm. Involved in resistance to stress. Associates with and regulates lipid droplets (LDs) homeostasis under conditions of stress and may regulate non-replicating persistence (NRP). Could be involved in preservation of envelope integrity and tolerance to surface stress. This chain is PspA protein, found in Mycobacterium tuberculosis (strain ATCC 25177 / H37Ra).